A 92-amino-acid polypeptide reads, in one-letter code: Acylphosphatase (92 aa).

Residues cysteine 5 and cysteine 49 are joined by a disulfide bond. Residues 5–92 enclose the Acylphosphatase-like domain; the sequence is CIIAWIYGRV…SGELTDFRIR (88 aa). Catalysis depends on residues arginine 20 and asparagine 38.

This sequence belongs to the acylphosphatase family.

It catalyses the reaction an acyl phosphate + H2O = a carboxylate + phosphate + H(+). In Shigella boydii serotype 4 (strain Sb227), this protein is Acylphosphatase.